Consider the following 302-residue polypeptide: D-alanine--D-alanine ligase (302 aa).

Residues 100–295 (KTVFDHHGIL…FNELIAKLIE (196 aa)) enclose the ATP-grasp domain. 126–180 (QDLEPPVFIKPNSGGSSLGMTFARTAEELEKGIETVFSLGDSALVEEYTKGIEVT) lines the ATP pocket. Positions 250, 262, and 264 each coordinate Mg(2+).

This sequence belongs to the D-alanine--D-alanine ligase family. Requires Mg(2+) as cofactor. It depends on Mn(2+) as a cofactor.

It localises to the cytoplasm. It catalyses the reaction 2 D-alanine + ATP = D-alanyl-D-alanine + ADP + phosphate + H(+). It participates in cell wall biogenesis; peptidoglycan biosynthesis. In terms of biological role, cell wall formation. The protein is D-alanine--D-alanine ligase of Maridesulfovibrio salexigens (strain ATCC 14822 / DSM 2638 / NCIMB 8403 / VKM B-1763) (Desulfovibrio salexigens).